The chain runs to 280 residues: MAIRKYKPTTPGRRQSSVSMFEEITRSTPEKSLVRPLPKKGGRNVHGHITVRHKGGGHKRQYRLIDFRRNDKDGIPAKVAHIEYDPNRTANIALLHYVDGEKRYIIAPKGLQQGQMIESGVNADIKVGNNLPLRNIPAGTTIHCVELKPGAGAKLARSAGASIQLLGKAGKYAVLRMPSSEIRRVDIRCRATVGEVGNADQINIRWGKAGRMRWKGVRPTVRGVVMNPVDHPHGGGEGKTSGGRHPVSPWGKKEGRTRNPNRYSNNMIVQRRRTNKSKKR.

Disordered regions lie at residues 1 to 47 (MAIR…NVHG) and 224 to 280 (VVMN…SKKR). Basic and acidic residues predominate over residues 23-33 (EITRSTPEKSL). Residues 37–47 (LPKKGGRNVHG) are compositionally biased toward basic residues. Residues 258–268 (RNPNRYSNNMI) show a composition bias toward polar residues. Residues 270–280 (QRRRTNKSKKR) are compositionally biased toward basic residues.

The protein belongs to the universal ribosomal protein uL2 family. As to quaternary structure, part of the 50S ribosomal subunit. Forms a bridge to the 30S subunit in the 70S ribosome.

Functionally, one of the primary rRNA binding proteins. Required for association of the 30S and 50S subunits to form the 70S ribosome, for tRNA binding and peptide bond formation. It has been suggested to have peptidyltransferase activity; this is somewhat controversial. Makes several contacts with the 16S rRNA in the 70S ribosome. The sequence is that of Large ribosomal subunit protein uL2 from Corynebacterium diphtheriae (strain ATCC 700971 / NCTC 13129 / Biotype gravis).